The chain runs to 228 residues: Large ribosomal subunit protein uL1 (228 aa).

The protein belongs to the universal ribosomal protein uL1 family. Part of the 50S ribosomal subunit.

Binds directly to 23S rRNA. The L1 stalk is quite mobile in the ribosome, and is involved in E site tRNA release. Functionally, protein L1 is also a translational repressor protein, it controls the translation of the L11 operon by binding to its mRNA. This is Large ribosomal subunit protein uL1 from Clavibacter sepedonicus (Clavibacter michiganensis subsp. sepedonicus).